Reading from the N-terminus, the 299-residue chain is ATP phosphoribosyltransferase (299 aa).

It belongs to the ATP phosphoribosyltransferase family. Long subfamily. Mg(2+) is required as a cofactor.

It is found in the cytoplasm. It catalyses the reaction 1-(5-phospho-beta-D-ribosyl)-ATP + diphosphate = 5-phospho-alpha-D-ribose 1-diphosphate + ATP. It participates in amino-acid biosynthesis; L-histidine biosynthesis; L-histidine from 5-phospho-alpha-D-ribose 1-diphosphate: step 1/9. With respect to regulation, feedback inhibited by histidine. Its function is as follows. Catalyzes the condensation of ATP and 5-phosphoribose 1-diphosphate to form N'-(5'-phosphoribosyl)-ATP (PR-ATP). Has a crucial role in the pathway because the rate of histidine biosynthesis seems to be controlled primarily by regulation of HisG enzymatic activity. This chain is ATP phosphoribosyltransferase, found in Campylobacter jejuni subsp. doylei (strain ATCC BAA-1458 / RM4099 / 269.97).